A 133-amino-acid polypeptide reads, in one-letter code: Small ribosomal subunit protein uS8 (133 aa).

Belongs to the universal ribosomal protein uS8 family. In terms of assembly, part of the 30S ribosomal subunit. Contacts proteins S5 and S12.

Functionally, one of the primary rRNA binding proteins, it binds directly to 16S rRNA central domain where it helps coordinate assembly of the platform of the 30S subunit. The protein is Small ribosomal subunit protein uS8 of Salinibacter ruber (strain DSM 13855 / M31).